Consider the following 125-residue polypeptide: UPF0102 protein Rpic_3463 (125 aa).

Belongs to the UPF0102 family.

The protein is UPF0102 protein Rpic_3463 of Ralstonia pickettii (strain 12J).